The primary structure comprises 228 residues: Rab-like protein 2A (228 aa).

Residues 28–35, 76–80, and 133–136 contribute to the GTP site; these read GDSAVGKS, DTAGQ, and NKID. Positions 200–228 are disordered; the sequence is LEQEEEDVPDQEQSSSIETPSEEVASPHS.

It belongs to the small GTPase superfamily. Rab family. Interacts with IFT27, IFT81, IFT172, ATP6V1E1, HK1, LDHC, MAPRE1 and HSPA2. As to expression, expressed in the testis.

Plays an essential role in male fertility, sperm intra-flagellar transport, and tail assembly. Binds, in a GTP-regulated manner, to a specific set of effector proteins including key proteins involved in cilia development and function and delivers them into the growing sperm tail. In Homo sapiens (Human), this protein is Rab-like protein 2A (RABL2A).